The primary structure comprises 339 residues: 5-dehydro-2-deoxygluconokinase (339 aa).

The protein belongs to the carbohydrate kinase PfkB family.

It catalyses the reaction 5-dehydro-2-deoxy-D-gluconate + ATP = 6-phospho-5-dehydro-2-deoxy-D-gluconate + ADP + H(+). The protein operates within polyol metabolism; myo-inositol degradation into acetyl-CoA; acetyl-CoA from myo-inositol: step 5/7. In terms of biological role, catalyzes the phosphorylation of 5-dehydro-2-deoxy-D-gluconate (2-deoxy-5-keto-D-gluconate or DKG) to 6-phospho-5-dehydro-2-deoxy-D-gluconate (DKGP). The protein is 5-dehydro-2-deoxygluconokinase of Clostridium botulinum (strain Eklund 17B / Type B).